Consider the following 298-residue polypeptide: Elongation factor Ts (298 aa).

The tract at residues 80–83 is involved in Mg(2+) ion dislocation from EF-Tu; sequence TDFV.

This sequence belongs to the EF-Ts family.

The protein localises to the cytoplasm. Associates with the EF-Tu.GDP complex and induces the exchange of GDP to GTP. It remains bound to the aminoacyl-tRNA.EF-Tu.GTP complex up to the GTP hydrolysis stage on the ribosome. The polypeptide is Elongation factor Ts (Acidovorax sp. (strain JS42)).